Consider the following 308-residue polypeptide: Aspartate carbamoyltransferase catalytic subunit (308 aa).

Carbamoyl phosphate-binding residues include Arg57 and Thr58. An L-aspartate-binding site is contributed by Lys86. The carbamoyl phosphate site is built by Arg107, His135, and Gln138. The L-aspartate site is built by Arg168 and Arg229. Carbamoyl phosphate contacts are provided by Leu268 and Pro269.

This sequence belongs to the aspartate/ornithine carbamoyltransferase superfamily. ATCase family. Heterooligomer of catalytic and regulatory chains.

It catalyses the reaction carbamoyl phosphate + L-aspartate = N-carbamoyl-L-aspartate + phosphate + H(+). The protein operates within pyrimidine metabolism; UMP biosynthesis via de novo pathway; (S)-dihydroorotate from bicarbonate: step 2/3. Functionally, catalyzes the condensation of carbamoyl phosphate and aspartate to form carbamoyl aspartate and inorganic phosphate, the committed step in the de novo pyrimidine nucleotide biosynthesis pathway. The chain is Aspartate carbamoyltransferase catalytic subunit from Pyrococcus horikoshii (strain ATCC 700860 / DSM 12428 / JCM 9974 / NBRC 100139 / OT-3).